The primary structure comprises 117 residues: Ubiquitin-like protein pmt3/smt3 (117 aa).

The tract at residues 1 to 37 (MSESPSANISDADKSAITPTTGDTSQQDVKPSTEHIN) is disordered. Polar residues predominate over residues 17–30 (ITPTTGDTSQQDVK). One can recognise a Ubiquitin-like domain in the interval 35-115 (HINLKVVGQD…LEQLGGCTHL (81 aa)). A Glycyl lysine isopeptide (Gly-Lys) (interchain with K-? in acceptor proteins) cross-link involves residue Gly-111. Residues 112 to 117 (CTHLCL) constitute a propeptide that is removed on maturation.

Belongs to the ubiquitin family. SUMO subfamily. In terms of assembly, interacts with rfp1.

It is found in the nucleus. Functionally, required for chromosome segregation where it may be involved in microtubule assembly. Loss of smt3 leads to an increase in telomere length. The chain is Ubiquitin-like protein pmt3/smt3 (pmt3) from Schizosaccharomyces pombe (strain 972 / ATCC 24843) (Fission yeast).